The primary structure comprises 150 residues: uncharacterized protein (150 aa).

An N-terminal signal peptide occupies residues Met-1 to Ser-39.

This is an uncharacterized protein from Saccharomyces cerevisiae (strain ATCC 204508 / S288c) (Baker's yeast).